Reading from the N-terminus, the 340-residue chain is UPF0284 protein Saci_0020 (340 aa).

This sequence belongs to the UPF0284 family.

In Sulfolobus acidocaldarius (strain ATCC 33909 / DSM 639 / JCM 8929 / NBRC 15157 / NCIMB 11770), this protein is UPF0284 protein Saci_0020.